The chain runs to 575 residues: 5-aminolevulinate synthase, mitochondrial (575 aa).

The N-terminal 55 residues, 1–55 (MESITRVSMSVCPFVKSSSAQALRQLSKNSALTSQARQCPFMGAALNAKESTRSY), are a transit peptide targeting the mitochondrion. Positions 124, 237, and 256 each coordinate substrate. Ser-289, His-317, and Thr-361 together coordinate pyridoxal 5'-phosphate. Lys-364 is an active-site residue. Residue Lys-364 is modified to N6-(pyridoxal phosphate)lysine. Pyridoxal 5'-phosphate is bound by residues Thr-393 and Thr-394. Thr-479 is a substrate binding site.

Belongs to the class-II pyridoxal-phosphate-dependent aminotransferase family. In terms of assembly, homodimer. Requires pyridoxal 5'-phosphate as cofactor.

The protein resides in the mitochondrion matrix. The enzyme catalyses succinyl-CoA + glycine + H(+) = 5-aminolevulinate + CO2 + CoA. It participates in porphyrin-containing compound metabolism; protoporphyrin-IX biosynthesis; 5-aminolevulinate from glycine: step 1/1. Its function is as follows. Catalyzes the synthesis of 5-aminolevulinate (ALA) from succinyl-CoA and glycine, the first and rate-limiting step in heme biosynthesis. This chain is 5-aminolevulinate synthase, mitochondrial (HEM1), found in Debaryomyces hansenii (strain ATCC 36239 / CBS 767 / BCRC 21394 / JCM 1990 / NBRC 0083 / IGC 2968) (Yeast).